The following is a 143-amino-acid chain: Beta/delta-urticatoxin-Uf2a (143 aa).

Residues Met-1–Ala-18 form the signal peptide. Positions Phe-19 to Asn-80 are excised as a propeptide. 6 disulfides stabilise this stretch: Cys-83-Cys-100, Cys-90-Cys-105, Cys-99-Cys-113, Cys-115-Cys-129, Cys-122-Cys-134, and Cys-128-Cys-142.

This sequence belongs to the urticatoxin-2 family. As to expression, expressed in trichomes, that are stiff epidermal hairs located on the surface of petioles and leaves.

The protein resides in the secreted. In terms of biological role, plant defense neurotoxin that causes pain and systemic symptoms in mammals via modulation of voltage-gated sodium channels (Nav). Potent modulator of human Nav1.5/SCN5A (EC(50)=55 nM), Nav1.6/SCN8A (EC(50)=0.86 nM), and Nav1.7/SCN9A (EC(50)=208 nM), where it shifts the activation threshold to more negative potentials and delays fast inactivation. Also shifts the voltage-dependence of steady-state fast inactivation of Nav1.6/SCN8A, but not that of Nav1.5/SCN5A or Nav1.7/SCN9A. On Nav1.7/SCN9A, principally acts by binding to extracellular loops of domain IV (Nav site 3). Does not affect current response of the tetrodotoxin (TTX)-resistant Nav1.8/SCN10A sodium channel. In vivo, intraplantar injection into mice causes numerous dose-dependent, immediate, and long-lasting spontaneous pain behaviors, while no swelling is observed in the injected paw. At the highest doses tested, systemic symptoms including hypokinesia and hypersalivation are observed. The sequence is that of Beta/delta-urticatoxin-Uf2a from Urtica ferox (Tree nettle).